The chain runs to 512 residues: MNSKIEIKPGRLTLAELRRMAKAPVGVRLEEKCKGKINASVQTVGEVIRQGRVIYGINTGFGLLANTIIPNEELEHLQRSLILSHAAGVGAFMADSTVRLMMVLKINSLARGYSGIRLEVIEALVQLLNAEVYPSVPQKGSVGASGDLAPLAHMSIVLLGEGEASYRGQRLSGREGLELAGLSPITLGPKEGLALLNGTQASTAFALQGLFAAEELFATAMVSGSLSLDAALGSRRPFNPLIHAVRGHKSQIDVAASYRQLLEHSEIERSHKFCEAVQDPYSLRCQPQVMGACLNQIRNAAEVIGTEANAVSDNPLVFCKENDIISGGNFHAEPIAMVADNLALAIAEIGALPERRTALLIDSHMSGLPPFLVDKGGLNSGFMIAQVTAAALASENKSLAHPASVDSLPTSANQEDHVSMATFAARRLLEMADNTAGILAIELLAACQGIDFRAPLKTSPLLEEAKSIVRQVVAFYDQDRYLAPDIKNAQALVQAGAFNHLVSRDLLPSFNR.

The 5-imidazolinone (Ala-Gly) cross-link spans Ala144–Gly146. Ser145 bears the 2,3-didehydroalanine (Ser) mark.

It belongs to the PAL/histidase family. In terms of processing, contains an active site 4-methylidene-imidazol-5-one (MIO), which is formed autocatalytically by cyclization and dehydration of residues Ala-Ser-Gly.

It is found in the cytoplasm. The catalysed reaction is L-histidine = trans-urocanate + NH4(+). It participates in amino-acid degradation; L-histidine degradation into L-glutamate; N-formimidoyl-L-glutamate from L-histidine: step 1/3. This chain is Histidine ammonia-lyase, found in Desulfotalea psychrophila (strain LSv54 / DSM 12343).